The sequence spans 247 residues: Elongation factor Ts (247 aa).

The segment at 82–85 is involved in Mg(2+) ion dislocation from EF-Tu; sequence TDFV.

It belongs to the EF-Ts family.

It localises to the cytoplasm. Its function is as follows. Associates with the EF-Tu.GDP complex and induces the exchange of GDP to GTP. It remains bound to the aminoacyl-tRNA.EF-Tu.GTP complex up to the GTP hydrolysis stage on the ribosome. In Arthrospira platensis (Spirulina platensis), this protein is Elongation factor Ts (tsf).